A 171-amino-acid polypeptide reads, in one-letter code: Adenine phosphoribosyltransferase (171 aa).

Belongs to the purine/pyrimidine phosphoribosyltransferase family. In terms of assembly, homodimer.

The protein localises to the cytoplasm. It catalyses the reaction AMP + diphosphate = 5-phospho-alpha-D-ribose 1-diphosphate + adenine. It functions in the pathway purine metabolism; AMP biosynthesis via salvage pathway; AMP from adenine: step 1/1. Its function is as follows. Catalyzes a salvage reaction resulting in the formation of AMP, that is energically less costly than de novo synthesis. In Mycoplasma mobile (strain ATCC 43663 / 163K / NCTC 11711) (Mesomycoplasma mobile), this protein is Adenine phosphoribosyltransferase.